The primary structure comprises 248 residues: 2-acetamido-2-deoxy-D-galactose-binding seed lectin 2 (248 aa).

Asn-119 carries an N-linked (GlcNAc...) asparagine; partial glycan. Mn(2+)-binding residues include Glu-128 and Asp-130. Ca(2+)-binding residues include Asp-130, Tyr-132, Asn-134, and Asp-138. Positions 138 and 144 each coordinate Mn(2+).

It belongs to the leguminous lectin family.

The polypeptide is 2-acetamido-2-deoxy-D-galactose-binding seed lectin 2 (Cytisus scoparius (Scotch broom)).